A 544-amino-acid chain; its full sequence is Rubrofusarin-specific efflux pump aurT (544 aa).

Residues 1-12 (MTDNTDMEKLDR) show a composition bias toward basic and acidic residues. The interval 1-42 (MTDNTDMEKLDRATTPTPIPNEAPPTSEPSESKPEEAEDESK) is disordered. Over residues 17–27 (TPIPNEAPPTS) the composition is skewed to pro residues. The span at 30–42 (SESKPEEAEDESK) shows a compositional bias: basic and acidic residues. The next 8 helical transmembrane spans lie at 45 to 65 (HGLKLAAIILSNMVAMFLVAL), 89 to 111 (WYASAYLITSSATQLLWGRIFTF), 116 to 136 (TVYLVAIFFFELGSLLCGVAP), 146 to 166 (AIAGAGSAGIYSGSTILITTV), 177 to 197 (GMMGAVFGIASVIAPLIGGAF), 205 to 225 (WCFYINLPVGGAAVACLILLF), 246 to 266 (WGNLVFLPGVICLILALQWGG), and 276 to 296 (IVALLVLACVLLLVFIGIQIW). N-linked (GlcNAc...) asparagine glycosylation is present at Asn-300. A run of 6 helical transmembrane segments spans residues 318 to 338 (IFAFCLGSVLIVFLIALPIWF), 357 to 377 (VLSLVFGAIVSGGVINGVGWF), 380 to 400 (VFFSSVIFMSVGGGLITTFVV), 407 to 427 (WIGYQIILGLGIGQGMQLASL), 444 to 464 (LMFFAQSLGGSVLVCVAQAVF), and 514 to 534 (YFYVGLAAACFAVLPSLGIEW).

The protein belongs to the major facilitator superfamily. TCR/Tet family.

Its subcellular location is the cell membrane. It participates in pigment biosynthesis. Functionally, rubrofusarin-specific efflux pump; part of the gene cluster that mediates the biosynthesis of aurofusarin, a red mycelium pigment which is acting as a mycotoxin. The first step is performed by the polyketide synthase which condenses one acetyl-CoA and 6 malonyl-CoA units to form the first intermediate, the cyclic heptaketide and yellow pigment YWA1. The C2 hydroxyl group in the pyrone ring of YWA1 is probably formed during ring closure by an aldol-type cyclization reaction. The dehydratase aurZ then acts as the first tailoring enzyme in the aurofusarin biosynthetic pathway by converting YWA1 to nor-rubrofusarin. Nor-rubrofusarin is then methylated to rubrofusarin by the O-methyltransferase aurJ. Rubrofusarin is then transported across the plasma membrane by the rubrofusarin-specific pump aurT for further enzymatic processing by the extracellular complex composed of GIP1, aurF, aurO and aurS to yield aurofusarin. This chain is Rubrofusarin-specific efflux pump aurT, found in Gibberella zeae (strain ATCC MYA-4620 / CBS 123657 / FGSC 9075 / NRRL 31084 / PH-1) (Wheat head blight fungus).